Here is a 1088-residue protein sequence, read N- to C-terminus: RNA-directed RNA polymerase (1088 aa).

A RdRp catalytic domain is found at 501-687; sequence LSYGDVTRFL…AKRYIAGGKI (187 aa).

It belongs to the reoviridae RNA-directed RNA polymerase family. In terms of assembly, interacts with VP3 (Potential). Interacts with VP2; this interaction activates VP1. Interacts with NSP5; this interaction is probably necessary for the formation of functional virus factories. Interacts with NSP2; this interaction is weak. It depends on Mg(2+) as a cofactor.

The protein localises to the virion. It catalyses the reaction RNA(n) + a ribonucleoside 5'-triphosphate = RNA(n+1) + diphosphate. Functionally, RNA-directed RNA polymerase that is involved in both transcription and genome replication. Together with VP3 capping enzyme, forms an enzyme complex positioned near the channels situated at each of the five-fold vertices of the core. Following infection, the outermost layer of the virus is lost, leaving a double-layered particle (DLP) made up of the core and VP6 shell. VP1 then catalyzes the transcription of fully conservative plus-strand genomic RNAs that are extruded through the DLP's channels into the cytoplasm where they function as mRNAs for translation of viral proteins. One copy of each of the viral (+)RNAs is also recruited during core assembly, together with newly synthesized polymerase complexes and VP2. The polymerase of these novo-formed particles catalyzes the synthesis of complementary minus-strands leading to dsRNA formation. To do so, the polymerase specifically recognizes and binds 4 bases 5'-UGUG-3' in the conserved 3'-sequence of plus-strand RNA templates. VP2 presumably activates the autoinhibited VP1-RNA complex to coordinate packaging and genome replication. Once dsRNA synthesis is complete, the polymerase switches to the transcriptional mode, thus providing secondary transcription. The protein is RNA-directed RNA polymerase of Homo sapiens (Human).